Consider the following 150-residue polypeptide: MGVEGTMEYISDLLKKRKRKKKKQMQTVALRVARIDCEGCERKIKHVLSGVKGVKSVDVDVKLQKVTVTGYIDPKKVLEAAKSTKKKVELWPYVPYTMVANPYISQAYDKKAPPNMVRKVPDTASVNETTVDDSYTIMFSDENPNSCAIM.

In terms of domain architecture, HMA spans 26–89 (QTVALRVARI…AAKSTKKKVE (64 aa)). The a metal cation site is built by C37 and C40. The residue at position 147 (C147) is a Cysteine methyl ester. C147 is lipidated: S-farnesyl cysteine. Positions 148–150 (AIM) are cleaved as a propeptide — removed in mature form.

Belongs to the HIPP family. As to quaternary structure, interacts with ZHD11/HB29.

Functionally, heavy-metal-binding protein. The chain is Heavy metal-associated isoprenylated plant protein 24 from Arabidopsis thaliana (Mouse-ear cress).